We begin with the raw amino-acid sequence, 559 residues long: Tectonic-like complex member MKS1 (559 aa).

Residues 311–439 (LRLFVNGEVV…TVSTWRPVEL (129 aa)) enclose the C2 B9-type domain.

Part of the tectonic-like complex (also named B9 complex). Interacts with TMEM107. Interacts with TCTN3, AHI1, TCTN1, TCTN2, CC2D2A. Interacts with FLNA. Interacts with TMEM67. Interacts with B9D1 and B9D2.

Its subcellular location is the cytoplasm. The protein localises to the cytoskeleton. The protein resides in the cilium basal body. It localises to the microtubule organizing center. It is found in the centrosome. Component of the tectonic-like complex, a complex localized at the transition zone of primary cilia and acting as a barrier that prevents diffusion of transmembrane proteins between the cilia and plasma membranes. Involved in centrosome migration to the apical cell surface during early ciliogenesis. Required for ciliary structure and function, including a role in regulating length and appropriate number through modulating centrosome duplication. Required for cell branching morphology. The polypeptide is Tectonic-like complex member MKS1 (MKS1) (Homo sapiens (Human)).